The following is a 477-amino-acid chain: Tyrosine-protein kinase transforming protein Fes (477 aa).

Positions 49–76 (GEPPPVLLLQDDRHSTSSSEQEREGGRT) are disordered. A compositionally biased stretch (basic and acidic residues) spans 58 to 74 (QDDRHSTSSSEQEREGG). Positions 115-204 (WYHGALPRAE…KSGIVLNRAV (90 aa)) constitute an SH2 domain. Residues 216–477 (LVLGEQIGRG…ELQSIRKRHR (262 aa)) enclose the Protein kinase domain. ATP contacts are provided by residues 222 to 230 (IGRGNFGEV) and Lys245. The Proton acceptor role is filled by Asp338. Tyr368 is subject to Phosphotyrosine; by autocatalysis.

This sequence belongs to the protein kinase superfamily. Tyr protein kinase family. Fes/fps subfamily.

The catalysed reaction is L-tyrosyl-[protein] + ATP = O-phospho-L-tyrosyl-[protein] + ADP + H(+). This is Tyrosine-protein kinase transforming protein Fes (V-FES) from Feline sarcoma virus (strain Snyder-Theilen).